The primary structure comprises 142 residues: Large ribosomal subunit protein uL11 (142 aa).

The protein belongs to the universal ribosomal protein uL11 family. In terms of assembly, part of the ribosomal stalk of the 50S ribosomal subunit. Interacts with L10 and the large rRNA to form the base of the stalk. L10 forms an elongated spine to which L12 dimers bind in a sequential fashion forming a multimeric L10(L12)X complex. In terms of processing, one or more lysine residues are methylated.

Forms part of the ribosomal stalk which helps the ribosome interact with GTP-bound translation factors. The sequence is that of Large ribosomal subunit protein uL11 from Vibrio campbellii (strain ATCC BAA-1116).